The chain runs to 65 residues: MARGKEIRVTINPECINCFRDSGRRYRGISRYTTQKNRRNTPIRLELRKFCRYCGEHTIHKEMKK.

This sequence belongs to the bacterial ribosomal protein bL33 family.

Its subcellular location is the plastid. The sequence is that of Large ribosomal subunit protein bL33c from Aneura mirabilis (Parasitic liverwort).